Reading from the N-terminus, the 158-residue chain is Large ribosomal subunit protein uL11 (158 aa).

The tract at residues 1-21 is disordered; that stretch reads MAQSVKTMVEGGKATTGPPIG.

Belongs to the universal ribosomal protein uL11 family. In terms of assembly, part of the ribosomal stalk of the 50S ribosomal subunit. Interacts with L10 and the large rRNA to form the base of the stalk. L10 forms an elongated spine to which L12 dimers bind in a sequential fashion forming a multimeric L10(L12)X complex.

Forms part of the ribosomal stalk which helps the ribosome interact with GTP-bound translation factors. The protein is Large ribosomal subunit protein uL11 of Thermoplasma volcanium (strain ATCC 51530 / DSM 4299 / JCM 9571 / NBRC 15438 / GSS1).